The following is an 85-amino-acid chain: UPF0473 protein CPR_1590 (85 aa).

This sequence belongs to the UPF0473 family.

This Clostridium perfringens (strain SM101 / Type A) protein is UPF0473 protein CPR_1590.